The following is a 189-amino-acid chain: Probable UbiX-like flavin prenyltransferase (189 aa).

FMN-binding positions include 9–11 (GAS), Ser-36, 87–90 (SMKT), and Arg-122.

The protein belongs to the UbiX/PAD1 family. YclB subfamily. As to quaternary structure, homododecamer.

The catalysed reaction is dimethylallyl phosphate + FMNH2 = prenylated FMNH2 + phosphate. In terms of biological role, involved in the non-oxidative decarboxylation and detoxification of phenolic derivatives under anaerobic conditions. Flavin prenyltransferase that catalyzes the synthesis of the prenylated FMN cofactor (prenyl-FMN) for phenolic acid decarboxylase. This Sedimentibacter hydroxybenzoicus (Clostridium hydroxybenzoicum) protein is Probable UbiX-like flavin prenyltransferase.